Consider the following 113-residue polypeptide: MNTVRVTFLLVFVVAVSLGQADKDENRMEMKDKTEQGKSYLHFAENLLLQKLEDVEAKLLEKDSEKSINSRQKRCIEEGVPCDENDPRCCSGLVCLKPTLRGIWYKSYYCYKK.

The first 21 residues, 1–21 (MNTVRVTFLLVFVVAVSLGQA), serve as a signal peptide directing secretion. Residues 22–74 (DKDENRMEMKDKTEQGKSYLHFAENLLLQKLEDVEAKLLEKDSEKSINSRQKR) constitute a propeptide that is removed on maturation. 3 disulfides stabilise this stretch: C75–C90, C82–C95, and C89–C110.

It belongs to the neurotoxin 14 (magi-1) family. 01 (HNTX-16) subfamily. Expressed by the venom gland.

It localises to the secreted. Functionally, probable ion channel inhibitor. The protein is U11-theraphotoxin-Hhn1d of Cyriopagopus hainanus (Chinese bird spider).